A 215-amino-acid chain; its full sequence is Protein-L-isoaspartate O-methyltransferase (215 aa).

Serine 62 is an active-site residue.

The protein belongs to the methyltransferase superfamily. L-isoaspartyl/D-aspartyl protein methyltransferase family.

Its subcellular location is the cytoplasm. The enzyme catalyses [protein]-L-isoaspartate + S-adenosyl-L-methionine = [protein]-L-isoaspartate alpha-methyl ester + S-adenosyl-L-homocysteine. Functionally, catalyzes the methyl esterification of L-isoaspartyl residues in peptides and proteins that result from spontaneous decomposition of normal L-aspartyl and L-asparaginyl residues. It plays a role in the repair and/or degradation of damaged proteins. The sequence is that of Protein-L-isoaspartate O-methyltransferase from Bradyrhizobium sp. (strain ORS 278).